A 160-amino-acid chain; its full sequence is tRNA (cytidine(56)-2'-O)-methyltransferase (160 aa).

S-adenosyl-L-methionine-binding positions include Leu-68, 94–98, and 112–119; these read GAEKV and IGNQPHSE.

The protein belongs to the aTrm56 family. In terms of assembly, homodimer.

Its subcellular location is the cytoplasm. The catalysed reaction is cytidine(56) in tRNA + S-adenosyl-L-methionine = 2'-O-methylcytidine(56) in tRNA + S-adenosyl-L-homocysteine + H(+). Its function is as follows. Specifically catalyzes the AdoMet-dependent 2'-O-ribose methylation of cytidine at position 56 in tRNAs. The polypeptide is tRNA (cytidine(56)-2'-O)-methyltransferase (Saccharolobus solfataricus (strain ATCC 35092 / DSM 1617 / JCM 11322 / P2) (Sulfolobus solfataricus)).